Reading from the N-terminus, the 198-residue chain is Carnitine operon protein CaiE (198 aa).

The segment at 179–198 (VEENRPRLKGTTDVKPKSAQ) is disordered. The span at 180 to 198 (EENRPRLKGTTDVKPKSAQ) shows a compositional bias: basic and acidic residues.

Belongs to the transferase hexapeptide repeat family.

Its pathway is amine and polyamine metabolism; carnitine metabolism. Functionally, overproduction of CaiE stimulates the activity of CaiB and CaiD. This is Carnitine operon protein CaiE from Salmonella enteritidis PT4 (strain P125109).